Here is an 88-residue protein sequence, read N- to C-terminus: UPF0250 protein Shew_2940 (88 aa).

This sequence belongs to the UPF0250 family.

This is UPF0250 protein Shew_2940 from Shewanella loihica (strain ATCC BAA-1088 / PV-4).